The sequence spans 1123 residues: Adenylyl cyclase X E (1123 aa).

Residues 1–47 (MPRSLGNCQLNYSKERMWEPGYLKAKCAELRLESEFRLYRIRLWKSY) are Cytoplasmic-facing. Residues 48–68 (LLTFFMLHIFVTSVHCALLLA) form a helical membrane-spanning segment. Residues 69–73 (TIERR) lie on the Extracellular side of the membrane. A helical membrane pass occupies residues 74–94 (SIIYFDVALSIGCALVLILVL). Over 95–106 (SVNFCDEFIAKH) the chain is Cytoplasmic. Residues 107–127 (TWYMYASSIFASLTLVFADLT) traverse the membrane as a helical segment. Topologically, residues 128 to 137 (ESIYHTYAHS) are extracellular. A helical membrane pass occupies residues 138–158 (WILGTFYDTYIIYMIYMFLPI). Residues 159 to 163 (HFISG) are Cytoplasmic-facing. Residues 164–184 (AVLLALLVSGLYILYFVIFIA) form a helical membrane-spanning segment. Over 185–196 (QGFAQFASALFS) the chain is Extracellular. A helical membrane pass occupies residues 197–217 (VGGMSVDIVHYLCLNLVGIFY). The Cytoplasmic segment spans residues 218-581 (RVMNDTVVRS…YLKQTDYMYK (364 aa)). Residues 346 to 348 (LGD) and R392 contribute to the ATP site. D348 is a binding site for Mg(2+). A helical transmembrane segment spans residues 582-602 (YSIILSASVGCSLVYIELMDT). The Extracellular segment spans residues 603–608 (QMICSS). The chain crosses the membrane as a helical span at residues 609–629 (CFVLPASVATIQCILALIAWY). Over 630–667 (KKYCWTRYGRNNVPHHYNGFSCFIFRIHDKILNSLPIR) the chain is Cytoplasmic. Residues 668-688 (ICIYLFLMISSFFVMCLIVMS) form a helical membrane-spanning segment. The Extracellular portion of the chain corresponds to 689–719 (CQREEFEMAYIEERLFHYEQEAHICFHPWVT). Residues 720 to 740 (TNMLSLMICLTFTFAHIPIMV) form a helical membrane-spanning segment. Topologically, residues 741-743 (KTA) are cytoplasmic. The chain crosses the membrane as a helical span at residues 744 to 764 (VAILETLAYLLLIFFQFDFVF). Topologically, residues 765-772 (HHSVTTNP) are extracellular. Residues 773–793 (YFKSEYAHALLICITFLIMFV) traverse the membrane as a helical segment. The Cytoplasmic segment spans residues 794–1123 (KERQIEFTNK…STSRHTLQSL (330 aa)). Residues K903, 1014 to 1016 (DIW), 1021 to 1025 (NMASR), and K1061 each bind ATP.

It belongs to the adenylyl cyclase class-4/guanylyl cyclase family. Expressed in labella.

Its subcellular location is the membrane. It catalyses the reaction ATP = 3',5'-cyclic AMP + diphosphate. In terms of biological role, catalyzes the formation of the signaling molecule cAMP in response to G-protein signaling. The chain is Adenylyl cyclase X E from Drosophila melanogaster (Fruit fly).